The following is a 449-amino-acid chain: Exodeoxyribonuclease 7 large subunit (449 aa).

This sequence belongs to the XseA family. As to quaternary structure, heterooligomer composed of large and small subunits.

Its subcellular location is the cytoplasm. The catalysed reaction is Exonucleolytic cleavage in either 5'- to 3'- or 3'- to 5'-direction to yield nucleoside 5'-phosphates.. Its function is as follows. Bidirectionally degrades single-stranded DNA into large acid-insoluble oligonucleotides, which are then degraded further into small acid-soluble oligonucleotides. The sequence is that of Exodeoxyribonuclease 7 large subunit from Salmonella agona (strain SL483).